The primary structure comprises 485 residues: Glutamyl-tRNA(Gln) amidotransferase subunit A (485 aa).

Catalysis depends on charge relay system residues lysine 78 and serine 153. Residue serine 177 is the Acyl-ester intermediate of the active site.

This sequence belongs to the amidase family. GatA subfamily. As to quaternary structure, heterotrimer of A, B and C subunits.

It carries out the reaction L-glutamyl-tRNA(Gln) + L-glutamine + ATP + H2O = L-glutaminyl-tRNA(Gln) + L-glutamate + ADP + phosphate + H(+). Its function is as follows. Allows the formation of correctly charged Gln-tRNA(Gln) through the transamidation of misacylated Glu-tRNA(Gln) in organisms which lack glutaminyl-tRNA synthetase. The reaction takes place in the presence of glutamine and ATP through an activated gamma-phospho-Glu-tRNA(Gln). This is Glutamyl-tRNA(Gln) amidotransferase subunit A from Trichlorobacter lovleyi (strain ATCC BAA-1151 / DSM 17278 / SZ) (Geobacter lovleyi).